The sequence spans 373 residues: Tryptophan--tRNA ligase (373 aa).

Positions 79 to 87 match the 'HIGH' region motif; that stretch reads PSGKFHFGH. The 'KMSKS' region motif lies at 257 to 261; the sequence is KMSSS.

This sequence belongs to the class-I aminoacyl-tRNA synthetase family.

It localises to the cytoplasm. The catalysed reaction is tRNA(Trp) + L-tryptophan + ATP = L-tryptophyl-tRNA(Trp) + AMP + diphosphate + H(+). This chain is Tryptophan--tRNA ligase, found in Hyperthermus butylicus (strain DSM 5456 / JCM 9403 / PLM1-5).